Consider the following 240-residue polypeptide: Probable septum site-determining protein MinC (240 aa).

This sequence belongs to the MinC family. In terms of assembly, interacts with MinD and FtsZ.

In terms of biological role, cell division inhibitor that blocks the formation of polar Z ring septums. Rapidly oscillates between the poles of the cell to destabilize FtsZ filaments that have formed before they mature into polar Z rings. Prevents FtsZ polymerization. This is Probable septum site-determining protein MinC from Acinetobacter baumannii (strain AYE).